Reading from the N-terminus, the 226-residue chain is V-type proton ATPase subunit E (226 aa).

The protein belongs to the V-ATPase E subunit family. V-ATPase is a heteromultimeric enzyme made up of two complexes: the ATP-hydrolytic V1 complex and the proton translocation V0 complex. The V1 complex consists of three catalytic AB heterodimers that form a heterohexamer, three peripheral stalks each consisting of EG heterodimers, one central rotor including subunits D and F, and the regulatory subunits C and H. The proton translocation complex V0 consists of the proton transport subunit a, a ring of proteolipid subunits c9c'', rotary subunit d, subunits e and f, and the accessory subunits vah-19/Ac45 and vah-20/PRR. As to expression, expressed in the excretory cell and syncytial hypodermal cells (at protein level). Expressed in the intestine (at protein level).

The protein resides in the cytoplasm. It localises to the apical cell membrane. Its function is as follows. Subunit of the V1 complex of vacuolar(H+)-ATPase (V-ATPase), a multisubunit enzyme composed of a peripheral complex (V1) that hydrolyzes ATP and a membrane integral complex (V0) that translocates protons. V-ATPase is responsible for acidifying and maintaining the pH of intracellular compartments and in some cell types, is targeted to the plasma membrane, where it is responsible for acidifying the extracellular environment. Regulates pH homeostasis in the intestine. Probably by regulating cytoplasmic pH, required for cell survival in the intestine and hypodermis. Involved in receptor-mediated endocytosis. Involved in embryogenesis and larval development. The sequence is that of V-type proton ATPase subunit E from Caenorhabditis elegans.